The primary structure comprises 363 residues: Flagellar P-ring protein (363 aa).

A signal peptide spans 1–20 (MKLKLILAVAMLAFSLPSQA).

Belongs to the FlgI family. As to quaternary structure, the basal body constitutes a major portion of the flagellar organelle and consists of four rings (L,P,S, and M) mounted on a central rod.

Its subcellular location is the periplasm. It is found in the bacterial flagellum basal body. Its function is as follows. Assembles around the rod to form the L-ring and probably protects the motor/basal body from shearing forces during rotation. The polypeptide is Flagellar P-ring protein (Shewanella sp. (strain MR-4)).